The sequence spans 162 residues: MQHLVLIGFMGSGKSSLAQELGLALNLEVLDTDMIISERVGLSVRGIFEELGEDNFRMFEKNLIDELKMLKNPHVISTGGGIIMHDNFKGLGTTFYLKMDFETIIKRLSKKEREKRPLLNNLTQAKELFEKRQALYEKNASFIINAQGGLKKSLKQALQFIA.

11–16 (GSGKSS) serves as a coordination point for ATP. Ser15 serves as a coordination point for Mg(2+). Substrate contacts are provided by Asp33, Arg57, and Gly80. ATP is bound at residue Arg116. Arg132 serves as a coordination point for substrate.

It belongs to the shikimate kinase family. Monomer. Requires Mg(2+) as cofactor.

Its subcellular location is the cytoplasm. The catalysed reaction is shikimate + ATP = 3-phosphoshikimate + ADP + H(+). Its pathway is metabolic intermediate biosynthesis; chorismate biosynthesis; chorismate from D-erythrose 4-phosphate and phosphoenolpyruvate: step 5/7. Its function is as follows. Catalyzes the specific phosphorylation of the 3-hydroxyl group of shikimic acid using ATP as a cosubstrate. This chain is Shikimate kinase, found in Helicobacter acinonychis (strain Sheeba).